The following is a 347-amino-acid chain: Fc receptor-like A (347 aa).

The first 27 residues, 1–27 (MKLSCMLIEWALYVCPAVLLATQMSLA), serve as a signal peptide directing secretion. 2 Ig-like C2-type domains span residues 77–166 (PFHL…ETAS) and 179–257 (PVLK…RQIS). 2 disulfide bridges follow: Cys-106-Cys-150 and Cys-199-Cys-247. Residues 272–296 (KPATPETPPPAKAPGPLPLLPTPSD) form a disordered region. Pro residues predominate over residues 276–292 (PETPPPAKAPGPLPLLP).

Monomer or homodimer; disulfide-linked.

It is found in the cytoplasm. Functionally, may be implicated in B-cell differentiation and lymphomagenesis. The protein is Fc receptor-like A (Fcrla) of Rattus norvegicus (Rat).